A 1113-amino-acid chain; its full sequence is MKKSVRPAASKVSGERGKPEVAGNAAAGKPASKSSTAAPLSKVKSSDDLLAAMAGGNPASCNAVSKSKRTTSVGTTASTLDSKPKTASGTTSKRLASSLSKETNLTRDRLRTSRASANKKQSAAGPVGGDAASGKRSRGQTLAESEGRMSKSKSDGQISDKVALETKVKDLLGLAKSKDVEILHLRSELRDMRAQLGLGGEEPQEGAVEEEKPHVSAITAADVESTLILLQEQNQAIREELNLLKSENRMLKDRLNALGFSLEQRLDGSDKLFSYASLSPDLAAGSGQSDGGGTGTLASSVEGSAPGSLEDLLTGHQHGGSADNLDSESSEVYQAVTSSDDALDAPSGASSSSESECAPSRERSRRGSSGNASEVSVACLTERIHQMEENQHSTAEELQATLQELADLQQITQELNGENERLGEEKVILMDSLCQQSDKLELYGRQIEYLRSLLDEHHVSYVLEEDIKSGRYMELEQRYADLAENGRFEREQLLGVQQHLSNTLKMAEQDNAEAQEMIGALKERNHQMERIMESERQGRAAVEATLEEYKEVASSDQAELSRCRAQLEQERQRVAELYSLHTAGDKNDICQLLEGVRLGKEEAEAKAAKLQEGLEQAHGELSHLRETFSKLDREYREFQEQAQQQMGEQERALEKQRLDLQEKETEVADMKETIFELEDEVEQHRALKLHDNLIITDLENSVKKLQDQKHDMEREIKILHRRLREESMEWRQFQADLQTAVVIANDIKSEAQEEIGDLRRRLQEAQEKNEKLSKELEEVKSRKQDEERGRVYNYMNAVERDLAALRQGMGLSRRSSTSSEPSPTVKTLIKSFDSASQGPPSSGASVTPTASAAPLPRTPLSPSPMKTPPAAAVSPIQRHSVSGSMSAAKPLSSLGDKRPTYPDISLPAEHLLRGSAAGRPPSALQRVSNMDSTKAISVSRRSSEEMKRDMAAPDGASSASLMAMSAASSPLALASSSPTASVTPTTRSRLREERKDPLSALAREYGGSKRNALLKWCQKKTEGYQNIDITNFSSSWNDGLAFCAVLHTYLPAHIPYQELTSQEKRRNFTLAFQAAESVGIKCTLDINEMVHTERPDWQSVMTYVTAIYKYFET.

Positions 1 to 160 (MKKSVRPAAS…KSKSDGQISD (160 aa)) are disordered. Polar residues predominate over residues 59-103 (ASCNAVSKSKRTTSVGTTASTLDSKPKTASGTTSKRLASSLSKET). The span at 145–154 (SEGRMSKSKS) shows a compositional bias: basic and acidic residues. Residues 220-259 (AADVESTLILLQEQNQAIREELNLLKSENRMLKDRLNALG) adopt a coiled-coil conformation. The tract at residues 284 to 374 (AGSGQSDGGG…RRGSSGNASE (91 aa)) is disordered. Residues 338–358 (SSDDALDAPSGASSSSESECA) are compositionally biased toward low complexity. Coiled-coil stretches lie at residues 379-433 (CLTE…MDSL) and 473-791 (MELE…RGRV). 4 disordered regions span residues 766–785 (QEKN…RKQD), 832–902 (FDSA…PTYP), 914–957 (GSAA…DGAS), and 972–997 (ALAS…RKDP). The segment covering 834–845 (SASQGPPSSGAS) has biased composition (low complexity). The segment covering 856-867 (PRTPLSPSPMKT) has biased composition (pro residues). Polar residues predominate over residues 925–940 (QRVSNMDSTKAISVSR). The segment covering 941–951 (RSSEEMKRDMA) has biased composition (basic and acidic residues). The span at 972–981 (ALASSSPTAS) shows a compositional bias: low complexity. One can recognise a Calponin-homology (CH) domain in the interval 1007 to 1112 (GSKRNALLKW…YVTAIYKYFE (106 aa)).

Belongs to the cytospin-A family. In terms of assembly, may interact with both microtubules and actin cytoskeleton.

The protein resides in the cytoplasm. It localises to the cytoskeleton. It is found in the spindle. The protein localises to the cell junction. Its subcellular location is the gap junction. Involved in cytokinesis and spindle organization. May play a role in actin cytoskeleton organization and microtubule stabilization and hence required for proper cell adhesion and migration. This Tetraodon nigroviridis (Spotted green pufferfish) protein is Cytospin-A (specc1l).